Consider the following 656-residue polypeptide: Methylenetetrahydrofolate reductase (NADPH) (656 aa).

The segment at 1–46 (MVNEARGNDSLNPCLEGSASSSSESSKDSSRCSTPGLDPERHERLR) is disordered. 9 positions are modified to phosphoserine: S10, S18, S20, S21, S23, S25, S26, S29, and S30. Phosphothreonine is present on T34. E63 acts as the Proton donor/acceptor in catalysis. Residues 63 to 68 (EFFPPR) and 94 to 95 (TW) each bind NAD(+). T94 is modified (phosphothreonine). 94-95 (TW) is a binding site for FAD. Residue S103 is modified to Phosphoserine. FAD contacts are provided by residues H127, 157–159 (RGD), 174–175 (YA), Y197, 201–204 (HPEA), D210, and K217. D159 serves as a coordination point for substrate. Substrate contacts are provided by Q228, Y321, and R325. The residue at position 394 (S394) is a Phosphoserine. Phosphothreonine is present on T451. S-adenosyl-L-methionine is bound by residues N456, 461–464 (AAET), 481–485 (TINSQ), T560, and T573.

The protein belongs to the methylenetetrahydrofolate reductase family. As to quaternary structure, homodimer. FAD serves as cofactor. Phosphorylation of an N-terminal serine-rich phosphorylation region increases sensitivity to S-adenosylmethionine and inhibition.

The enzyme catalyses (6S)-5-methyl-5,6,7,8-tetrahydrofolate + NADP(+) = (6R)-5,10-methylene-5,6,7,8-tetrahydrofolate + NADPH + H(+). Its pathway is one-carbon metabolism; tetrahydrofolate interconversion. With respect to regulation, allosterically regulated by S-adenosylmethionine (SAM). In terms of biological role, catalyzes the conversion of 5,10-methylenetetrahydrofolate to 5-methyltetrahydrofolate, a cosubstrate for homocysteine remethylation to methionine. Represents a key regulatory connection between the folate and methionine cycles. In Macaca fascicularis (Crab-eating macaque), this protein is Methylenetetrahydrofolate reductase (NADPH) (MTHFR).